Consider the following 358-residue polypeptide: MKGATAIINLKSLRHNLEKIQQYAPKSRLMAVVKANAYGHGLLTVAQALKNADYFSVARIEEALTLRSGGIIKPILLLEGFFSLEDLAVLQVNHIETVIHNFEQLVALEKVRLPEPVRVWMKIDTGMHRLGVRLEQADAFYQRLQNCPNVAKPIHIITHLSDVNPHHPVVTDQQIRSFDAFVQGKPGQKSIAASGAILLCPQSHRDVVRPGIALYGISPFEHFIGRDYGLLPVMTLQSPLIAVREHKAGETVGYAGEWISQTATFLGVLAIGYGDGYPQSAPTGTPVWINDRQVPIVGRVSMDMISVDLGRDATDKVGDRAVLWGDQLSLEKVASYIGYTAYELVSKLTGRVAISYVN.

Lys34 serves as the catalytic Proton acceptor; specific for D-alanine. Position 34 is an N6-(pyridoxal phosphate)lysine (Lys34). Arg129 is a substrate binding site. The Proton acceptor; specific for L-alanine role is filled by Tyr254. Met302 is a binding site for substrate.

This sequence belongs to the alanine racemase family. It depends on pyridoxal 5'-phosphate as a cofactor.

The catalysed reaction is L-alanine = D-alanine. It functions in the pathway amino-acid biosynthesis; D-alanine biosynthesis; D-alanine from L-alanine: step 1/1. Catalyzes the interconversion of L-alanine and D-alanine. May also act on other amino acids. This is Alanine racemase (alr) from Hamiltonella defensa subsp. Acyrthosiphon pisum (strain 5AT).